Consider the following 936-residue polypeptide: Protein translocase subunit SecA (936 aa).

ATP contacts are provided by residues Gln87, 105-109 (GEGKT), and Asp515. 4 residues coordinate Zn(2+): Cys920, Cys922, Cys931, and His932.

The protein belongs to the SecA family. Monomer and homodimer. Part of the essential Sec protein translocation apparatus which comprises SecA, SecYEG and auxiliary proteins SecDF-YajC and YidC. It depends on Zn(2+) as a cofactor.

It localises to the cell inner membrane. Its subcellular location is the cytoplasm. It catalyses the reaction ATP + H2O + cellular proteinSide 1 = ADP + phosphate + cellular proteinSide 2.. Functionally, part of the Sec protein translocase complex. Interacts with the SecYEG preprotein conducting channel. Has a central role in coupling the hydrolysis of ATP to the transfer of proteins into and across the cell membrane, serving both as a receptor for the preprotein-SecB complex and as an ATP-driven molecular motor driving the stepwise translocation of polypeptide chains across the membrane. This is Protein translocase subunit SecA from Paraburkholderia phytofirmans (strain DSM 17436 / LMG 22146 / PsJN) (Burkholderia phytofirmans).